Consider the following 398-residue polypeptide: Transcription factor kk1f (398 aa).

Residues 1–28 (MTFVETVAVPDNEERPSAGHNRPVADST) form a disordered region. The bZIP domain maps to 31–62 (PNAREMKVQNRVAQRTHHRRLKTKLEVLRERL). The basic motif stretch occupies residues 34 to 50 (REMKVQNRVAQRTHHRR). The segment at 51-58 (LKTKLEVL) is leucine-zipper.

It belongs to the bZIP family.

The protein localises to the nucleus. It participates in secondary metabolite biosynthesis. In terms of biological role, transcription factor; part of the gene cluster that mediates the biosynthesis of KK-1, a novel cyclic depsipeptide with 10 residues which is a promising active compound with high activity against many plant pathogens, especially Botrytis cinerea. Positively regulates the expression of all the genes from the KK-1 biosynthesis gene cluster. This chain is Transcription factor kk1f, found in Curvularia clavata.